A 447-amino-acid chain; its full sequence is ATP-dependent protease ATPase subunit HslU (447 aa).

ATP is bound by residues Ile17 and 59 to 64; that span reads GVGKTE. The disordered stretch occupies residues 136–160; the sequence is PPARGGFQGEPTAEEKPTEKKESAT. Residues 148–159 show a composition bias toward basic and acidic residues; it reads AEEKPTEKKESA. The ATP site is built by Asp260, Glu325, and Arg397.

Belongs to the ClpX chaperone family. HslU subfamily. A double ring-shaped homohexamer of HslV is capped on each side by a ring-shaped HslU homohexamer. The assembly of the HslU/HslV complex is dependent on binding of ATP.

It is found in the cytoplasm. In terms of biological role, ATPase subunit of a proteasome-like degradation complex; this subunit has chaperone activity. The binding of ATP and its subsequent hydrolysis by HslU are essential for unfolding of protein substrates subsequently hydrolyzed by HslV. HslU recognizes the N-terminal part of its protein substrates and unfolds these before they are guided to HslV for hydrolysis. This is ATP-dependent protease ATPase subunit HslU from Coxiella burnetii (strain Dugway 5J108-111).